We begin with the raw amino-acid sequence, 406 residues long: Acetylornithine/succinyldiaminopimelate aminotransferase (406 aa).

Pyridoxal 5'-phosphate contacts are provided by residues 108–109 (GT) and phenylalanine 141. Arginine 144 is a binding site for N(2)-acetyl-L-ornithine. 226–229 (DEVQ) contributes to the pyridoxal 5'-phosphate binding site. Lysine 255 bears the N6-(pyridoxal phosphate)lysine mark. Serine 283 lines the N(2)-acetyl-L-ornithine pocket. Residue threonine 284 participates in pyridoxal 5'-phosphate binding.

It belongs to the class-III pyridoxal-phosphate-dependent aminotransferase family. ArgD subfamily. As to quaternary structure, homodimer. Pyridoxal 5'-phosphate serves as cofactor.

Its subcellular location is the cytoplasm. It carries out the reaction N(2)-acetyl-L-ornithine + 2-oxoglutarate = N-acetyl-L-glutamate 5-semialdehyde + L-glutamate. The catalysed reaction is N-succinyl-(2S,6S)-2,6-diaminopimelate + 2-oxoglutarate = (S)-2-succinylamino-6-oxoheptanedioate + L-glutamate. It functions in the pathway amino-acid biosynthesis; L-arginine biosynthesis; N(2)-acetyl-L-ornithine from L-glutamate: step 4/4. The protein operates within amino-acid biosynthesis; L-lysine biosynthesis via DAP pathway; LL-2,6-diaminopimelate from (S)-tetrahydrodipicolinate (succinylase route): step 2/3. Its function is as follows. Involved in both the arginine and lysine biosynthetic pathways. The chain is Acetylornithine/succinyldiaminopimelate aminotransferase from Escherichia coli (strain K12).